The following is a 132-amino-acid chain: Transcription antitermination protein NusB (132 aa).

Belongs to the NusB family.

In terms of biological role, involved in transcription antitermination. Required for transcription of ribosomal RNA (rRNA) genes. Binds specifically to the boxA antiterminator sequence of the ribosomal RNA (rrn) operons. The protein is Transcription antitermination protein NusB of Lachnoclostridium phytofermentans (strain ATCC 700394 / DSM 18823 / ISDg) (Clostridium phytofermentans).